A 360-amino-acid chain; its full sequence is MQIIRHSEQTLKTALISKNPVLVSQYEKLNAGEQRLMNEAFQPASDLFGPITLHSPSDWITSHPEAPQDFEQFFSDPYRKTPSPNKRSIYIQSIGSLGNTRIISEEYIKWLTGYCKAYFYGLRVKLLEPVPVSVTRCSFRVNENTHNLQIHAGDILKFLKKKKPEDAFCVVGITMIDLYPRDSWNFVFGQASLTDGVGIFSFARYGSDFYSMHYKGKVKKLKKTSSSDYSIFDNYYIPEITSVLLLRSCKTLTHEIGHIFGLRHCQWLACLMQGSNHLEEADRRPLNLCPICLHKLQCAVGFSIVERYKALVRWIDDESSDTPGATPEHSHEDNGNLPKPVEAFKEWKEWIIKCLAVLQK.

H254 is a Zn(2+) binding site. The active-site Proton acceptor is E255. The Zn(2+) site is built by H258, H264, C265, C270, C289, and C292.

Belongs to the peptidase M54 family. The cofactor is Zn(2+). In terms of tissue distribution, down-regulated in testis from patients with maturation arrest (MA) or Sertoli cell-only syndrome (SCOS).

In terms of biological role, probable zinc metalloprotease. The chain is Archaemetzincin-2 (AMZ2) from Homo sapiens (Human).